Here is a 155-residue protein sequence, read N- to C-terminus: Interleukin-2 (155 aa).

The N-terminal stretch at M1–G20 is a signal peptide. A glycan (O-linked (GalNAc...) threonine) is linked at T23. Cysteines 79 and 127 form a disulfide.

The protein belongs to the IL-2 family.

The protein resides in the secreted. Cytokine produced by activated CD4-positive helper T-cells and to a lesser extend activated CD8-positive T-cells and natural killer (NK) cells that plays pivotal roles in the immune response and tolerance. Binds to a receptor complex composed of either the high-affinity trimeric IL-2R (IL2RA/CD25, IL2RB/CD122 and IL2RG/CD132) or the low-affinity dimeric IL-2R (IL2RB and IL2RG). Interaction with the receptor leads to oligomerization and conformation changes in the IL-2R subunits resulting in downstream signaling starting with phosphorylation of JAK1 and JAK3. In turn, JAK1 and JAK3 phosphorylate the receptor to form a docking site leading to the phosphorylation of several substrates including STAT5. This process leads to activation of several pathways including STAT, phosphoinositide-3-kinase/PI3K and mitogen-activated protein kinase/MAPK pathways. Functions as a T-cell growth factor and can increase NK-cell cytolytic activity as well. Promotes strong proliferation of activated B-cells and subsequently immunoglobulin production. Plays a pivotal role in regulating the adaptive immune system by controlling the survival and proliferation of regulatory T-cells, which are required for the maintenance of immune tolerance. Moreover, participates in the differentiation and homeostasis of effector T-cell subsets, including Th1, Th2, Th17 as well as memory CD8-positive T-cells. The chain is Interleukin-2 (IL2) from Moschus berezovskii (Chinese forest musk deer).